Reading from the N-terminus, the 630-residue chain is Peptidyl-prolyl cis-trans isomerase cyp15 (630 aa).

The tract at residues 1-46 (MPEDSNTNDNNKRPLEDNNAVDGESDDDIGPMLPPPPGEDAPRKKK) is disordered. 5 WD repeats span residues 70–108 (MHRDVLSQVAVTKKDFIITTSVDGHLKFWKKTASGIEFV), 113–152 (SHLSSIVDISISANHELLATISDDTTLKVYDITNFDMINM), 157–198 (YKPK…KPLH), 203–242 (MHSKPVHIIEFNSRFNCVVSVDAIGMIEYWSPEAPFALPD), and 258–301 (RKKK…REYD). One can recognise a PPIase cyclophilin-type domain in the interval 475–629 (LGTSAIIRTT…DDIKIINIDI (155 aa)).

This sequence belongs to the cyclophilin-type PPIase family.

The catalysed reaction is [protein]-peptidylproline (omega=180) = [protein]-peptidylproline (omega=0). Functionally, PPIases accelerate the folding of proteins. It catalyzes the cis-trans isomerization of proline imidic peptide bonds in oligopeptides. This chain is Peptidyl-prolyl cis-trans isomerase cyp15 (cyp15), found in Rhizopus delemar (strain RA 99-880 / ATCC MYA-4621 / FGSC 9543 / NRRL 43880) (Mucormycosis agent).